Consider the following 295-residue polypeptide: MNFGKVLTAMVTPFDKHEEIDFQALDHLIDHLINNGSDGLVVAGTTGESPTLTHEERIKLFEYVVKKVNGAVPVIAGTGSNYTKASIELTKEVAKTGVDGVMLVAPYYNKPSQDSMYEHFKVIAESTELPVMLYNVPGRTGVDMDVSTVVRLSQIDNIVSIKDASGNLEKMTNIIRLTDDNFSVYSGEDSLTLPALAIGADGIVSVSSHIIGNDMQEMIQRFEQGQVAEAANIHQRVLPVMQEMFANPSPVPVKTALNLQSVPVGKVRLPLIELTDEQLQNLQSVLSDFEHSKMI.

Thr46 is a pyruvate binding site. Tyr134 (proton donor/acceptor) is an active-site residue. Lys162 functions as the Schiff-base intermediate with substrate in the catalytic mechanism. Pyruvate is bound at residue Val204.

Belongs to the DapA family. Homotetramer; dimer of dimers.

Its subcellular location is the cytoplasm. The enzyme catalyses L-aspartate 4-semialdehyde + pyruvate = (2S,4S)-4-hydroxy-2,3,4,5-tetrahydrodipicolinate + H2O + H(+). It functions in the pathway amino-acid biosynthesis; L-lysine biosynthesis via DAP pathway; (S)-tetrahydrodipicolinate from L-aspartate: step 3/4. In terms of biological role, catalyzes the condensation of (S)-aspartate-beta-semialdehyde [(S)-ASA] and pyruvate to 4-hydroxy-tetrahydrodipicolinate (HTPA). This is 4-hydroxy-tetrahydrodipicolinate synthase from Oceanobacillus iheyensis (strain DSM 14371 / CIP 107618 / JCM 11309 / KCTC 3954 / HTE831).